A 633-amino-acid chain; its full sequence is Molybdenum cofactor biosynthesis protein 1 (633 aa).

Residues 1–380 (MAAQPVSRVV…QMKNRPMILI (380 aa)) are molybdenum cofactor biosynthesis protein A. Residue serine 61 is modified to Phosphoserine. Residues 61–295 (SFGRHHSYLR…AKAFKIPGFR (235 aa)) enclose the Radical SAM core domain. Arginine 70 serves as a coordination point for GTP. The [4Fe-4S] cluster site is built by cysteine 77 and cysteine 81. Tyrosine 83 contributes to the S-adenosyl-L-methionine binding site. Cysteine 84 is a [4Fe-4S] cluster binding site. Arginine 120 is a GTP binding site. Glycine 124 provides a ligand contact to S-adenosyl-L-methionine. Threonine 151 contributes to the GTP binding site. Serine 175 contributes to the S-adenosyl-L-methionine binding site. The residue at position 195 (lysine 195) is an N6-acetyllysine. A GTP-binding site is contributed by lysine 212. Methionine 246 lines the S-adenosyl-L-methionine pocket. Cysteine 309 and cysteine 312 together coordinate [4Fe-4S] cluster. 314–316 (RLR) provides a ligand contact to GTP. Cysteine 326 provides a ligand contact to [4Fe-4S] cluster. The tract at residues 410–633 (VSFSSQMVTL…GGQRGDFHRT (224 aa)) is molybdenum cofactor biosynthesis protein C. A disordered region spans residues 446 to 480 (SSHLDSDANPKCLSPTEPQAPAASSGPLPDSDQLT). Lysine 525 carries the N6-acetyllysine modification. Residue aspartate 603 is the For molybdenum cofactor biosynthesis protein C activity of the active site.

The protein in the C-terminal section; belongs to the MoaC family. In the N-terminal section; belongs to the radical SAM superfamily. MoaA family. In terms of assembly, isoform MOCS1A and isoform MOCS1B probably form a heterooligomer. The cofactor is [4Fe-4S] cluster.

It carries out the reaction GTP + AH2 + S-adenosyl-L-methionine = (8S)-3',8-cyclo-7,8-dihydroguanosine 5'-triphosphate + 5'-deoxyadenosine + L-methionine + A + H(+). The enzyme catalyses (8S)-3',8-cyclo-7,8-dihydroguanosine 5'-triphosphate = cyclic pyranopterin phosphate + diphosphate. The protein operates within cofactor biosynthesis; molybdopterin biosynthesis. In terms of biological role, isoform MOCS1A and isoform MOCS1B probably form a complex that catalyzes the conversion of 5'-GTP to cyclic pyranopterin monophosphate (cPMP). MOCS1A catalyzes the cyclization of GTP to (8S)-3',8-cyclo-7,8-dihydroguanosine 5'-triphosphate and MOCS1B catalyzes the subsequent conversion of (8S)-3',8-cyclo-7,8-dihydroguanosine 5'-triphosphate to cPMP. The polypeptide is Molybdenum cofactor biosynthesis protein 1 (MOCS1) (Bos taurus (Bovine)).